A 51-amino-acid chain; its full sequence is ATP synthase F(1) complex subunit epsilon, mitochondrial (51 aa).

N6-acetyllysine; alternate occurs at positions 21, 32, and 37. An N6-succinyllysine; alternate mark is found at Lys21, Lys32, and Lys37. Lys44 is subject to N6-acetyllysine.

Belongs to the eukaryotic ATPase epsilon family. Component of the ATP synthase complex composed at least of ATP5F1A/subunit alpha, ATP5F1B/subunit beta, ATP5MC1/subunit c (homooctomer), MT-ATP6/subunit a, MT-ATP8/subunit 8, ATP5ME/subunit e, ATP5MF/subunit f, ATP5MG/subunit g, ATP5MK/subunit k, ATP5MJ/subunit j, ATP5F1C/subunit gamma, ATP5F1D/subunit delta, ATP5F1E/subunit epsilon, ATP5PF/subunit F6, ATP5PB/subunit b, ATP5PD/subunit d, ATP5PO/subunit OSCP. ATP synthase complex consists of a soluble F(1) head domain (subunits alpha(3) and beta(3)) - the catalytic core - and a membrane F(0) domain - the membrane proton channel (subunits c, a, 8, e, f, g, k and j). These two domains are linked by a central stalk (subunits gamma, delta, and epsilon) rotating inside the F1 region and a stationary peripheral stalk (subunits F6, b, d, and OSCP).

It is found in the mitochondrion. Its subcellular location is the mitochondrion inner membrane. In terms of biological role, subunit epsilon, of the mitochondrial membrane ATP synthase complex (F(1)F(0) ATP synthase or Complex V) that produces ATP from ADP in the presence of a proton gradient across the membrane which is generated by electron transport complexes of the respiratory chain. ATP synthase complex consist of a soluble F(1) head domain - the catalytic core - and a membrane F(1) domain - the membrane proton channel. These two domains are linked by a central stalk rotating inside the F(1) region and a stationary peripheral stalk. During catalysis, ATP synthesis in the catalytic domain of F(1) is coupled via a rotary mechanism of the central stalk subunits to proton translocation. In vivo, can only synthesize ATP although its ATP hydrolase activity can be activated artificially in vitro. May be essential for the assembly of F(1) and may play an important role in the incorporation of the hydrophobic subunit c into the F(1)-c oligomer rotor of the mitochondrial ATP synthase complex. The sequence is that of ATP synthase F(1) complex subunit epsilon, mitochondrial from Bos taurus (Bovine).